The primary structure comprises 217 residues: Regulator of G-protein signaling 19 (217 aa).

A disordered region spans residues 1-29; the sequence is MPTPHEAEKQITGPEEADRPPSMSSHDTA. 2 positions are modified to phosphoserine: Ser24 and Ser97. The RGS domain occupies 90 to 206; it reads SFDKLMHSPA…LSSPTYRALL (117 aa). A Phosphoserine; by MAPK1 and MAPK3 modification is found at Ser151. The segment at 207-217 is interaction with GIPC; it reads LQGPSQSSSEA.

Interacts with GIPC PDZ domain. Interacts with GNAO1. Post-translationally, fatty acylated. Heavily palmitoylated in the cysteine string motif. In terms of processing, phosphorylated, mainly on serine residues. As to expression, highest expression in lung. Placenta, liver and heart also express high levels of GAIP.

The protein resides in the membrane. Functionally, inhibits signal transduction by increasing the GTPase activity of G protein alpha subunits thereby driving them into their inactive GDP-bound form. Binds to G-alpha subfamily 1 members, with the order G(i)a3 &gt; G(i)a1 &gt; G(o)a &gt;&gt; G(z)a/G(i)a2. Activity on G(z)-alpha is inhibited by phosphorylation and palmitoylation of the G-protein. The protein is Regulator of G-protein signaling 19 (RGS19) of Homo sapiens (Human).